Here is a 360-residue protein sequence, read N- to C-terminus: Protein phosphatase 1 regulatory subunit 7 (360 aa).

The tract at residues 1 to 63 (MAAERGAGQQ…RGAEDPEEEH (63 aa)) is disordered. Residue Ala-2 is modified to N-acetylalanine. 5 positions are modified to phosphoserine: Ser-12, Ser-24, Ser-27, Ser-44, and Ser-47. Positions 17-34 (EVDRRVESEESGDEEGKK) are enriched in basic and acidic residues. 11 LRR repeats span residues 77 to 98 (DAED…EVLK), 99 to 120 (KVKS…DELQ), 121 to 142 (SLRE…EALT), 143 to 164 (ELEV…DKLT), 165 to 186 (QLKK…STLQ), 187 to 208 (QLQM…DTLT), 209 to 230 (NLES…DALS), 231 to 252 (NLTV…QNLV), 253 to 274 (NLRE…ENNN), 275 to 296 (KLTM…SHLT), and 297 to 318 (ELQE…DELK). Ser-322 is modified (phosphoserine). The region spanning 331–360 (NPLQKDPQYRRKVMLALPSVRQIDATFVRF) is the LRRCT domain.

Belongs to the SDS22 family. In terms of assembly, interacts with PPP1CA, PPP1CB and PPP1CC/PPP1G.

It localises to the nucleus. Regulatory subunit of protein phosphatase 1. The protein is Protein phosphatase 1 regulatory subunit 7 (Ppp1r7) of Rattus norvegicus (Rat).